The chain runs to 884 residues: Putative GTP diphosphokinase RSH1, chloroplastic (884 aa).

Residues Met-1–Val-55 constitute a chloroplast transit peptide. Residues Phe-172–Met-279 enclose the HD domain. A TGS domain is found at Leu-563–Thr-626. Residues Gln-711–Ser-727 show a composition bias toward polar residues. The segment at Gln-711–Asp-747 is disordered. The ACT domain occupies Trp-797–Ser-868.

This sequence belongs to the RelA/SpoT family. In terms of assembly, interacts with RPP4. Interacts with RPP5. As to expression, expressed in hypocotyls, shoots, cotyledons, rosette leaves, sepals and pistils.

Its subcellular location is the plastid. It localises to the chloroplast. The catalysed reaction is GTP + ATP = guanosine 3'-diphosphate 5'-triphosphate + AMP. In terms of biological role, may be involved in a rapid plant ppGpp (guanosine 3'-diphosphate 5'-diphosphate)-mediated response to pathogens and other stresses. Unable to functionally complement E.coli relA mutants. The chain is Putative GTP diphosphokinase RSH1, chloroplastic (RSH1) from Arabidopsis thaliana (Mouse-ear cress).